The following is a 460-amino-acid chain: Argininosuccinate lyase (460 aa).

Belongs to the lyase 1 family. Argininosuccinate lyase subfamily.

The protein resides in the cytoplasm. The enzyme catalyses 2-(N(omega)-L-arginino)succinate = fumarate + L-arginine. It functions in the pathway amino-acid biosynthesis; L-arginine biosynthesis; L-arginine from L-ornithine and carbamoyl phosphate: step 3/3. In Desulforamulus reducens (strain ATCC BAA-1160 / DSM 100696 / MI-1) (Desulfotomaculum reducens), this protein is Argininosuccinate lyase.